The following is a 235-amino-acid chain: Ribonuclease PH (235 aa).

Phosphate contacts are provided by residues R86 and 124–126 (GTR).

It belongs to the RNase PH family. As to quaternary structure, homohexameric ring arranged as a trimer of dimers.

It catalyses the reaction tRNA(n+1) + phosphate = tRNA(n) + a ribonucleoside 5'-diphosphate. Phosphorolytic 3'-5' exoribonuclease that plays an important role in tRNA 3'-end maturation. Removes nucleotide residues following the 3'-CCA terminus of tRNAs; can also add nucleotides to the ends of RNA molecules by using nucleoside diphosphates as substrates, but this may not be physiologically important. Probably plays a role in initiation of 16S rRNA degradation (leading to ribosome degradation) during starvation. This Francisella tularensis subsp. tularensis (strain FSC 198) protein is Ribonuclease PH.